We begin with the raw amino-acid sequence, 164 residues long: 2-C-methyl-D-erythritol 2,4-cyclodiphosphate synthase (164 aa).

A divalent metal cation contacts are provided by aspartate 9 and histidine 11. 4-CDP-2-C-methyl-D-erythritol 2-phosphate contacts are provided by residues 9-11 and 35-36; these read DVH and HS. Histidine 43 provides a ligand contact to a divalent metal cation. Residues 57–59, 62–66, 133–136, phenylalanine 140, and arginine 143 each bind 4-CDP-2-C-methyl-D-erythritol 2-phosphate; these read DIG, FPDTD, and TTTE.

The protein belongs to the IspF family. As to quaternary structure, homotrimer. A divalent metal cation is required as a cofactor.

The enzyme catalyses 4-CDP-2-C-methyl-D-erythritol 2-phosphate = 2-C-methyl-D-erythritol 2,4-cyclic diphosphate + CMP. It functions in the pathway isoprenoid biosynthesis; isopentenyl diphosphate biosynthesis via DXP pathway; isopentenyl diphosphate from 1-deoxy-D-xylulose 5-phosphate: step 4/6. Involved in the biosynthesis of isopentenyl diphosphate (IPP) and dimethylallyl diphosphate (DMAPP), two major building blocks of isoprenoid compounds. Catalyzes the conversion of 4-diphosphocytidyl-2-C-methyl-D-erythritol 2-phosphate (CDP-ME2P) to 2-C-methyl-D-erythritol 2,4-cyclodiphosphate (ME-CPP) with a corresponding release of cytidine 5-monophosphate (CMP). The sequence is that of 2-C-methyl-D-erythritol 2,4-cyclodiphosphate synthase from Syntrophotalea carbinolica (strain DSM 2380 / NBRC 103641 / GraBd1) (Pelobacter carbinolicus).